The chain runs to 296 residues: NADPH-dependent 1-acyldihydroxyacetone phosphate reductase (296 aa).

Ile-9 is an NADP(+) binding site. The GXSXG motif lies at 11 to 15 (GCSEG). Thr-35, Arg-41, Asp-56, Asn-84, Lys-117, Tyr-148, Lys-152, Val-181, and Thr-183 together coordinate NADP(+). Tyr-148 (proton donor) is an active-site residue. Lys-152 (lowers pKa of active site Tyr) is an active-site residue.

It belongs to the short-chain dehydrogenases/reductases (SDR) family.

It is found in the lipid droplet. It localises to the cytoplasm. The protein resides in the vacuole. The protein localises to the endoplasmic reticulum. Its subcellular location is the golgi apparatus. It is found in the mitochondrion outer membrane. It catalyses the reaction 1-hexadecanoyl-sn-glycero-3-phosphate + NADP(+) = 1-hexadecanoylglycerone 3-phosphate + NADPH + H(+). It carries out the reaction a 1-acylglycerone 3-phosphate + NADPH + H(+) = a 1-acyl-sn-glycero-3-phosphate + NADP(+). The enzyme catalyses a triacylglycerol + H2O = a diacylglycerol + a fatty acid + H(+). In terms of biological role, can convert acyl and alkyl dihydroxyacetone-phosphate (DHAP) into glycerolipids and ether lipids, respectively. Required for the biosynthesis of phosphatidic acid via the DHAP pathway, where it reduces 1-acyl DHAP to lysophosphatidic acid (LPA). Also has triacylglycerol (TAG) lipase activity. Involved in the mobilization of the non-polar storage lipids triacylglycerols (TAGs) from lipid particles by hydrolysis of TAGs. Lipolysis of TAG by AYR1 is essential for starvation-induced autophagy. Forms an NADPH-regulated cation-selective channel in the mitochondrial outer membrane. The sequence is that of NADPH-dependent 1-acyldihydroxyacetone phosphate reductase (ayr1) from Schizosaccharomyces pombe (strain 972 / ATCC 24843) (Fission yeast).